The primary structure comprises 180 residues: GTP cyclohydrolase 1 (180 aa).

The Zn(2+) site is built by Cys71, His74, and Cys142.

Belongs to the GTP cyclohydrolase I family. As to quaternary structure, toroid-shaped homodecamer, composed of two pentamers of five dimers.

The catalysed reaction is GTP + H2O = 7,8-dihydroneopterin 3'-triphosphate + formate + H(+). The protein operates within cofactor biosynthesis; 7,8-dihydroneopterin triphosphate biosynthesis; 7,8-dihydroneopterin triphosphate from GTP: step 1/1. This is GTP cyclohydrolase 1 (folE) from Helicobacter pylori (strain J99 / ATCC 700824) (Campylobacter pylori J99).